The chain runs to 63 residues: Lantipeptide Flvbeta.a (63 aa).

Positions 1–28 are cleaved as a propeptide — cleaved by FlvT; the sequence is MSEKNMEKAGVVKADELDEMIDETTGGA. A 2,3-didehydrobutyrine; by FlvM2 mark is found at Thr30, Thr33, Thr38, and Thr39. The lanthionine (Ser-Cys); by FlvM2 cross-link spans 43-49; sequence SKGLQNC. 2,3-didehydrobutyrine; by FlvM2 is present on residues Thr54 and Thr55.

In terms of processing, maturation of FlvA2 peptides involves the enzymatic conversion of Thr, and Ser into dehydrated AA and the formation of thioether bonds with cysteines. Modifications are processed by the flavecin synthetase FlvM2. This is followed by membrane translocation and cleavage of the modified precursor. Post-translationally, contains DL-lanthionine, when coepressed in E.coli with the flavecin synthetase FlvM2.

The protein resides in the secreted. Functionally, lanthionine-containing peptide that does probably not show antibacterial activity, since its analog [+3]Flvbeta.a does not show antibacterial activity against M.luteus. Also does not show antibiotic activity when tested with [Del2]Flvalpha.a, an analog of Flvalpha.a, which is encoded by the same operon than Flvbeta.a. The bactericidal activity of lantibiotics is based on depolarization of energized bacterial cytoplasmic membranes, initiated by the formation of aqueous transmembrane pores. This is Lantipeptide Flvbeta.a from Ruminococcus flavefaciens.